The primary structure comprises 160 residues: PTDAQTDARSFLSEEMIAEFKAAFDMFDTDGGGDISTKELGTVMRMLGQNPTREELDAIIEEVDEDGSGTIDFEEFLVMMVRQLKEDQAGKSEEELAEFFRVFDKNGDGFIDREEFGEILRSSGEPVSEEEIDELMADGDKNNDGKIDFDEWLKMMENIQ.

4 EF-hand domains span residues 15-50 (EMIA…LGQN), 51-86 (PTRE…QLKE), 91-126 (KSEE…SGEP), and 127-160 (VSEE…ENIQ). The Ca(2+) site is built by aspartate 28, aspartate 30, aspartate 34, glutamate 39, aspartate 64, aspartate 66, serine 68, threonine 70, glutamate 75, aspartate 104, asparagine 106, aspartate 108, glutamate 115, aspartate 140, asparagine 142, aspartate 144, lysine 146, and glutamate 151.

It belongs to the troponin C family.

Its function is as follows. Troponin is the central regulatory protein of striated muscle contraction. Tn consists of three components: Tn-I which is the inhibitor of actomyosin ATPase, Tn-T which contains the binding EF-hand for tropomyosin and Tn-C. The binding of calcium to Tn-C abolishes the inhibitory action of Tn on actin filaments. The polypeptide is Troponin C, skeletal muscle (Anguilla anguilla (European freshwater eel)).